A 162-amino-acid polypeptide reads, in one-letter code: MERIKQFFKSFLLVEMLKGMKVTGRYLFAPKITVHYPEEKTPQSPRFRGLHALRRYPNGEERCIACKLCEAVCPAMAITIESEQRDDSTRRTTRYDIDMIKCIFCGFCEEACPVDAIVETRVLEYHGEVRGDLTYTKEMLLAVGDRYEEQIARDRAADAPYR.

4Fe-4S ferredoxin-type domains lie at 53–83 and 93–122; these read LRRY…IESE and TRYD…ETRV. 8 residues coordinate [4Fe-4S] cluster: C63, C66, C69, C73, C102, C105, C108, and C112.

This sequence belongs to the complex I 23 kDa subunit family. As to quaternary structure, NDH-1 is composed of 14 different subunits. Subunits NuoA, H, J, K, L, M, N constitute the membrane sector of the complex. [4Fe-4S] cluster serves as cofactor.

The protein resides in the cell inner membrane. The enzyme catalyses a quinone + NADH + 5 H(+)(in) = a quinol + NAD(+) + 4 H(+)(out). NDH-1 shuttles electrons from NADH, via FMN and iron-sulfur (Fe-S) centers, to quinones in the respiratory chain. The immediate electron acceptor for the enzyme in this species is believed to be ubiquinone. Couples the redox reaction to proton translocation (for every two electrons transferred, four hydrogen ions are translocated across the cytoplasmic membrane), and thus conserves the redox energy in a proton gradient. This is NADH-quinone oxidoreductase subunit I from Nitrosomonas europaea (strain ATCC 19718 / CIP 103999 / KCTC 2705 / NBRC 14298).